The sequence spans 529 residues: Probable feruloyl esterase B-1 (529 aa).

An N-terminal signal peptide occupies residues 1–19 (MKISYFFVASLSYVSVARA). 2 cysteine pairs are disulfide-bonded: Cys-27–Cys-75 and Cys-63–Cys-114. N-linked (GlcNAc...) asparagine glycans are attached at residues Asn-53, Asn-64, Asn-85, Asn-98, and Asn-138. Intrachain disulfides connect Cys-187–Cys-445, Cys-256–Cys-273, Cys-282–Cys-295, and Cys-505–Cys-527. Ser-188 acts as the Acyl-ester intermediate in catalysis. Asn-233 carries N-linked (GlcNAc...) asparagine glycosylation. Residues Asp-257, Asp-260, Ala-262, Asp-264, and Leu-266 each coordinate Ca(2+). N-linked (GlcNAc...) asparagine glycans are attached at residues Asn-286, Asn-290, and Asn-354. Active-site charge relay system residues include Asp-404 and His-444.

The protein belongs to the tannase family.

It localises to the secreted. The catalysed reaction is feruloyl-polysaccharide + H2O = ferulate + polysaccharide.. In terms of biological role, involved in degradation of plant cell walls. Hydrolyzes the feruloyl-arabinose ester bond in arabinoxylans as well as the feruloyl-galactose and feruloyl-arabinose ester bonds in pectin. This Aspergillus terreus (strain NIH 2624 / FGSC A1156) protein is Probable feruloyl esterase B-1 (faeB-1).